A 3122-amino-acid polypeptide reads, in one-letter code: Large tegument protein deneddylase (3122 aa).

Positions 1–248 (MIPAALPHPT…SETYLQDEPF (248 aa)) are deubiquitination activity. The Peptidase C76 domain occupies 20-238 (VVTGVRNQFA…TAAALHLYGA (219 aa)). Catalysis depends on residues Cys-40, Asp-172, and His-174. 2 disordered regions span residues 281–367 (GSGP…GDAA) and 387–496 (RARY…PPGA). The span at 343–353 (SAPDAAASGPP) shows a compositional bias: low complexity. 2 stretches are compositionally biased toward basic residues: residues 387–400 (RARY…RRRP) and 425–436 (KAKKKSAPKKKA). Over residues 437-454 (PVAAEVPASSPTPIAATV) the composition is skewed to low complexity. The segment at 548-578 (LELCVIFFFERVLAFLIENGARTHTQAGVAG) is interaction with inner tegument protein. 3 disordered regions span residues 2494–2539 (YQRP…ADPG), 2570–2974 (ASDD…THLP), and 3006–3059 (SDDE…SQFG). Pro residues-rich tracts occupy residues 2578-2590 (TPNP…PPPA) and 2637-2654 (PSPP…PPPA). A compositionally biased stretch (low complexity) spans 2655–2667 (FSGSAAAFSAAVP). Over residues 2668 to 2681 (RVRRSRRTRAKSRA) the composition is skewed to basic residues. Pro residues-rich tracts occupy residues 2690 to 2700 (GWRPPALPAPV) and 2710 to 2719 (PDQPPTPESA). Residues 2734-2743 (ASARGAFPAP) show a composition bias toward low complexity. Pro residues-rich tracts occupy residues 2744 to 2753 (TLAPIPPPPA) and 2775 to 2785 (SPTPPRGPAAG). 2 stretches are compositionally biased toward low complexity: residues 2786–2807 (PPRR…SLPS) and 2814–2825 (HAAAVSAAAAAV). Residues 2841 to 2852 (SPPPLAPGPVAP) are compositionally biased toward pro residues. A compositionally biased stretch (low complexity) spans 2853–2867 (SEPLCGWVVPGGPVA). Tandem repeats lie at residues 2891–2895 (PQPPL), 2896–2900 (PQPPL), 2901–2905 (PQPPL), 2906–2910 (PQPPL), 2911–2915 (PQPPL), 2916–2920 (PQPPL), 2921–2925 (PQPPL), 2926–2930 (PQPPL), 2931–2935 (PQPPL), 2936–2940 (PQPPL), and 2941–2945 (PQPPL). Positions 2891–2945 (PQPPLPQPPLPQPPLPQPPLPQPPLPQPPLPQPPLPQPPLPQPPLPQPPLPQPPL) are 11 X 5 AA tandem repeats of P-Q-P-P-L. The segment covering 2891–2947 (PQPPLPQPPLPQPPLPQPPLPQPPLPQPPLPQPPLPQPPLPQPPLPQPPLPQPPLPP) has biased composition (pro residues). Composition is skewed to polar residues over residues 2950–2959 (RTLTPQSRDS) and 2965–2974 (SPTHTNTHLP). The segment covering 3006–3020 (SDDEHSDADSLRFSD) has biased composition (basic and acidic residues). The segment covering 3029–3045 (PLPPEPHLPPADEPPGP) has biased composition (pro residues).

Belongs to the herpesviridae large tegument protein family. As to quaternary structure, interacts with host CUL1 and CUL4A; these interactions inhibit the E3 ligase activity of cullins. Interacts with inner tegument protein. Interacts with capsid vertex specific component CVC2. Interacts with the major capsid protein/MCP. Proteolytically processed, possibly into several polypeptides. Enzymatic activity is only detectable following cleavage of the UL36 protein, which occurs late during viral replication.

The protein localises to the virion tegument. It is found in the host cytoplasm. The protein resides in the host nucleus. It carries out the reaction Thiol-dependent hydrolysis of ester, thioester, amide, peptide and isopeptide bonds formed by the C-terminal Gly of ubiquitin (a 76-residue protein attached to proteins as an intracellular targeting signal).. Its function is as follows. Large tegument protein that plays multiple roles in the viral cycle. During viral entry, remains associated with the capsid while most of the tegument is detached and participates in the capsid transport toward the host nucleus. Plays a role in the routing of the capsid at the nuclear pore complex and subsequent uncoating. Within the host nucleus, acts as a deneddylase and promotes the degradation of nuclear CRLs (cullin-RING ubiquitin ligases) and thereby stabilizes nuclear CRL substrates, while cytoplasmic CRLs remain unaffected. These modifications prevent host cell cycle S-phase progression and create a favorable environment allowing efficient viral genome replication. Participates later in the secondary envelopment of capsids. Indeed, plays a linker role for the association of the outer viral tegument to the capsids together with the inner tegument protein. The polypeptide is Large tegument protein deneddylase (Human herpesvirus 2 (strain HG52) (HHV-2)).